The primary structure comprises 149 residues: Ribonuclease pancreatic (149 aa).

The first 25 residues, 1 to 25 (MGLEKSLILFPLLVLVLGWVQPSLA), serve as a signal peptide directing secretion. Substrate is bound by residues Lys32 and Arg35. His37 serves as the catalytic Proton acceptor. Cystine bridges form between Cys51–Cys109, Cys65–Cys120, Cys83–Cys135, and Cys90–Cys97. Residues 66-70 (KPVNT), Lys91, and Arg110 contribute to the substrate site. His144 serves as the catalytic Proton donor.

It belongs to the pancreatic ribonuclease family. In terms of assembly, monomer. Interacts with and forms tight 1:1 complexes with RNH1. Dimerization of two such complexes may occur. Interaction with RNH1 inhibits this protein. As to expression, pancreas.

It is found in the secreted. It carries out the reaction an [RNA] containing cytidine + H2O = an [RNA]-3'-cytidine-3'-phosphate + a 5'-hydroxy-ribonucleotide-3'-[RNA].. It catalyses the reaction an [RNA] containing uridine + H2O = an [RNA]-3'-uridine-3'-phosphate + a 5'-hydroxy-ribonucleotide-3'-[RNA].. In terms of biological role, endonuclease that catalyzes the cleavage of RNA on the 3' side of pyrimidine nucleotides. Acts on single-stranded and double-stranded RNA. The protein is Ribonuclease pancreatic (RNASE1) of Uranomys ruddi (White-bellied brush-furred rat).